We begin with the raw amino-acid sequence, 267 residues long: Sorbitol-6-phosphate 2-dehydrogenase (267 aa).

Position 9-38 (9-38 (DNVIIVTGGASGIGLAIVDELLSQGAHVQM)) interacts with NAD(+). Serine 147 lines the substrate pocket. The active-site Proton acceptor is the tyrosine 160.

It belongs to the short-chain dehydrogenases/reductases (SDR) family. In terms of assembly, homotetramer.

The enzyme catalyses D-sorbitol 6-phosphate + NAD(+) = beta-D-fructose 6-phosphate + NADH + H(+). It functions in the pathway carbohydrate metabolism; D-sorbitol degradation; D-fructose 6-phosphate from D-sorbitol 6-phosphate: step 1/1. The polypeptide is Sorbitol-6-phosphate 2-dehydrogenase (sorD) (Klebsiella pneumoniae).